The primary structure comprises 667 residues: Endogenous retrovirus group K member 5 Gag polyprotein (667 aa).

Gly-2 carries N-myristoyl glycine lipidation. Positions 166 to 188 (KGPELVGPSESKPRGPSPLPAGQ) are disordered. CCHC-type zinc fingers lie at residues 543–560 (KKCY…SCPV) and 580–597 (GLCP…QCHS). Residues 598–667 (KFDKDGQPLS…CPAPQQAAPQ (70 aa)) form a disordered region. Polar residues predominate over residues 648–667 (GVSQLQQSNSCPAPQQAAPQ).

It belongs to the beta type-B retroviral Gag protein family. HERV class-II K(HML-2) gag subfamily. Post-translationally, myristoylation is essential for retroviral assembly. Alteration of the glycine residue leads to a block in the budding of particles and an accumulation of Gag inside the cell. Specific enzymatic cleavages may yield mature proteins.

The protein resides in the cell membrane. Its function is as follows. The products of the Gag polyproteins of infectious retroviruses perform highly complex orchestrated tasks during the assembly, budding, maturation, and infection stages of the viral replication cycle. During viral assembly, the proteins form membrane associations and self-associations that ultimately result in budding of an immature virion from the infected cell. Gag precursors also function during viral assembly to selectively bind and package two plus strands of genomic RNA. Endogenous Gag proteins may have kept, lost or modified their original function during evolution. The protein is Endogenous retrovirus group K member 5 Gag polyprotein (ERVK-5) of Homo sapiens (Human).